We begin with the raw amino-acid sequence, 698 residues long: NAD(+)--arginine ADP-ribosyltransferase (698 aa).

The 254-residue stretch at Glu-375–Thr-628 folds into the TR mART core domain. Catalysis depends on residues Arg-481, Ser-506, and Glu-590.

Belongs to the Tevenvirinae NAD(+)--arginine ADP-ribosyltransferase family. In terms of processing, proteolytic cleavages at the N- and C-termini by the prohead core protein protease give rise to the mature enzyme.

Its subcellular location is the virion. The enzyme catalyses L-arginyl-[protein] + NAD(+) = N(omega)-(ADP-D-ribosyl)-L-arginyl-[protein] + nicotinamide + H(+). ADP-ribosyltransferase that efficiently ADP-ribosylates one of the two alpha subunits of host RNA polymerase RPOA on an arginine located in the C-terminal region. ADP-ribosylation of RPOA alpha subunit enhances the transcription of viral early genes. Also ribosylates RPOA subunits beta, beta' and sigma 70 and performs an autoribosylation reaction. The protein is NAD(+)--arginine ADP-ribosyltransferase (alt) of Escherichia coli (Bacteriophage T2).